A 323-amino-acid polypeptide reads, in one-letter code: Small ribosomal subunit protein uS3 (323 aa).

The KH type-2 domain occupies Ile17–Asp86. The interval Ala251 to Glu303 is disordered. A compositionally biased stretch (acidic residues) spans Gly270–Glu303.

The protein belongs to the universal ribosomal protein uS3 family. As to quaternary structure, part of the 30S ribosomal subunit.

Functionally, binds the lower part of the 30S subunit head. The chain is Small ribosomal subunit protein uS3 from Haloquadratum walsbyi (strain DSM 16790 / HBSQ001).